Reading from the N-terminus, the 32-residue chain is Calcitonin (32 aa).

Cysteines 1 and 7 form a disulfide. Proline amide is present on Pro-32.

The protein belongs to the calcitonin family.

The protein localises to the secreted. Functionally, causes a rapid but short-lived drop in the level of calcium and phosphate in blood by promoting the incorporation of those ions in the bones. The protein is Calcitonin of Aquarana catesbeiana (American bullfrog).